The sequence spans 308 residues: Paired box protein 3 homolog (308 aa).

A DNA-binding region (paired) is located at residues 13-140 (GQGRVNQLGG…PAIKRLIGNK (128 aa)). Positions 16 to 72 (RVNQLGGVFINGRPLPIHVRHAIISMAKKGIKPCHISRQLKVSHGAVSKILNRYAET) are PAI subdomain. Residues 92–140 (AVEKEILIACDENPQMSAAELRDWLIHKDICTKGNAPTVPAIKRLIGNK) are RED subdomain. The disordered stretch occupies residues 168–191 (CSKSSSDDEEGSSPSNDASSRRNR). The segment at residues 187 to 246 (SRRNRTSFTAEQLDVLENAFRADTYPHANARESISKETGLSEEKIMTWFSNRRARCRKNM) is a DNA-binding region (homeobox).

The protein belongs to the paired homeobox family.

It localises to the nucleus. Its function is as follows. Transcriptional activator. Regulates the lateral/ventral epidermal cell fate decision. In Caenorhabditis elegans, this protein is Paired box protein 3 homolog.